Consider the following 104-residue polypeptide: Ribonuclease P protein component 4 (104 aa).

Zn(2+)-binding residues include Cys-63, Cys-66, Cys-89, and Cys-92.

This sequence belongs to the eukaryotic/archaeal RNase P protein component 4 family. In terms of assembly, consists of a catalytic RNA component and at least 4-5 protein subunits. Requires Zn(2+) as cofactor.

It localises to the cytoplasm. It catalyses the reaction Endonucleolytic cleavage of RNA, removing 5'-extranucleotides from tRNA precursor.. Its function is as follows. Part of ribonuclease P, a protein complex that generates mature tRNA molecules by cleaving their 5'-ends. This is Ribonuclease P protein component 4 from Methanoregula boonei (strain DSM 21154 / JCM 14090 / 6A8).